The following is a 362-amino-acid chain: Peptide chain release factor 1 (362 aa).

At Gln237 the chain carries N5-methylglutamine.

It belongs to the prokaryotic/mitochondrial release factor family. Methylated by PrmC. Methylation increases the termination efficiency of RF1.

Its subcellular location is the cytoplasm. Functionally, peptide chain release factor 1 directs the termination of translation in response to the peptide chain termination codons UAG and UAA. The protein is Peptide chain release factor 1 (prfA) of Aquifex aeolicus (strain VF5).